Reading from the N-terminus, the 191-residue chain is Peptidyl-tRNA hydrolase (191 aa).

Tyrosine 16 lines the tRNA pocket. The Proton acceptor role is filled by histidine 21. TRNA is bound by residues phenylalanine 66, asparagine 68, and asparagine 114.

Belongs to the PTH family. As to quaternary structure, monomer.

It localises to the cytoplasm. It catalyses the reaction an N-acyl-L-alpha-aminoacyl-tRNA + H2O = an N-acyl-L-amino acid + a tRNA + H(+). Hydrolyzes ribosome-free peptidyl-tRNAs (with 1 or more amino acids incorporated), which drop off the ribosome during protein synthesis, or as a result of ribosome stalling. In terms of biological role, catalyzes the release of premature peptidyl moieties from peptidyl-tRNA molecules trapped in stalled 50S ribosomal subunits, and thus maintains levels of free tRNAs and 50S ribosomes. The chain is Peptidyl-tRNA hydrolase from Geotalea uraniireducens (strain Rf4) (Geobacter uraniireducens).